A 184-amino-acid polypeptide reads, in one-letter code: ATP synthase subunit b, chloroplastic (184 aa).

The chain crosses the membrane as a helical span at residues 27–49; that stretch reads LATNPINLSVVFGVLIFFGKGVL.

It belongs to the ATPase B chain family. As to quaternary structure, F-type ATPases have 2 components, F(1) - the catalytic core - and F(0) - the membrane proton channel. F(1) has five subunits: alpha(3), beta(3), gamma(1), delta(1), epsilon(1). F(0) has four main subunits: a(1), b(1), b'(1) and c(10-14). The alpha and beta chains form an alternating ring which encloses part of the gamma chain. F(1) is attached to F(0) by a central stalk formed by the gamma and epsilon chains, while a peripheral stalk is formed by the delta, b and b' chains.

The protein localises to the plastid. The protein resides in the chloroplast thylakoid membrane. In terms of biological role, f(1)F(0) ATP synthase produces ATP from ADP in the presence of a proton or sodium gradient. F-type ATPases consist of two structural domains, F(1) containing the extramembraneous catalytic core and F(0) containing the membrane proton channel, linked together by a central stalk and a peripheral stalk. During catalysis, ATP synthesis in the catalytic domain of F(1) is coupled via a rotary mechanism of the central stalk subunits to proton translocation. Functionally, component of the F(0) channel, it forms part of the peripheral stalk, linking F(1) to F(0). This Olimarabidopsis pumila (Dwarf rocket) protein is ATP synthase subunit b, chloroplastic.